The primary structure comprises 248 residues: Aquaporin Z (248 aa).

The next 2 membrane-spanning stretches (helical) occupy residues 11-31 (FIGT…AAAF) and 36-56 (IGFA…AFAI). An NPA 1 motif is present at residues 65-67 (NPA). Helical transmembrane passes span 87-107 (IAAQ…IAGG), 132-152 (LLAC…IILG), and 161-181 (GFAP…SIPV). The NPA 2 motif lies at 187-189 (NPA). Residues 203 to 223 (IAELWLFWLAPIVGAALAGLF) form a helical membrane-spanning segment.

The protein belongs to the MIP/aquaporin (TC 1.A.8) family. Homotetramer.

The protein resides in the cell inner membrane. The catalysed reaction is H2O(in) = H2O(out). Its function is as follows. Channel that permits osmotically driven movement of water in both directions. It is involved in the osmoregulation and in the maintenance of cell turgor during volume expansion in rapidly growing cells. It mediates rapid entry or exit of water in response to abrupt changes in osmolarity. The protein is Aquaporin Z of Gloeobacter violaceus (strain ATCC 29082 / PCC 7421).